The chain runs to 59 residues: Large ribosomal subunit protein bL32 (59 aa).

Residues 1-15 show a composition bias toward basic residues; sequence MAVPKRKTSKSKRDM. Residues 1–21 are disordered; the sequence is MAVPKRKTSKSKRDMRRASNS.

This sequence belongs to the bacterial ribosomal protein bL32 family.

This chain is Large ribosomal subunit protein bL32, found in Alkaliphilus metalliredigens (strain QYMF).